Consider the following 893-residue polypeptide: DNA mismatch repair protein MutS (893 aa).

Residue 638–645 (GPNMAGKS) participates in ATP binding.

The protein belongs to the DNA mismatch repair MutS family.

Its function is as follows. This protein is involved in the repair of mismatches in DNA. It is possible that it carries out the mismatch recognition step. This protein has a weak ATPase activity. This chain is DNA mismatch repair protein MutS, found in Lawsonia intracellularis (strain PHE/MN1-00).